The primary structure comprises 119 residues: UPF0102 protein SGR_1878 (119 aa).

It belongs to the UPF0102 family.

The protein is UPF0102 protein SGR_1878 of Streptomyces griseus subsp. griseus (strain JCM 4626 / CBS 651.72 / NBRC 13350 / KCC S-0626 / ISP 5235).